A 32-amino-acid chain; its full sequence is Dermatoxin-J3 (32 aa).

Q32 bears the Glutamine amide mark.

In terms of tissue distribution, expressed by the skin glands.

The protein resides in the secreted. In terms of biological role, antimicrobial peptide. In Phasmahyla jandaia (Jandaia leaf frog), this protein is Dermatoxin-J3.